A 152-amino-acid chain; its full sequence is SKP1-like protein 11 (152 aa).

The tract at residues 94 to 152 (ILAANYLNIKSLLDLTCQTVADMIKGKTPEEIRSTFNIENDFTPEEEEAVRKENQWAFE) is interaction with the F-box domain of F-box proteins.

It belongs to the SKP1 family. Part of a SCF (SKP1-cullin-F-box) protein ligase complex. Interacts with ADO3/FKF1, COI1/FBL2, EBF1/FBL6, PP2A13, PP2B10, UFO, SKIP2, SKIP15, SKIP16, SKIP32, CPR1/CPR30, At1g55000, At1g67340, At1g78100, At3g04660, At3g16740, At3g61590, At4g38940 and At5g49610. In terms of tissue distribution, expressed in young seedlings, cotyledons, roots, leaves, floral stems, inflorescences, pollen, and siliques, with a slightly higher level in inflorescence than in other tissues.

It is found in the nucleus. Its pathway is protein modification; protein ubiquitination. In terms of biological role, involved in ubiquitination and subsequent proteasomal degradation of target proteins. Together with CUL1, RBX1 and a F-box protein, it forms a SCF E3 ubiquitin ligase complex. The functional specificity of this complex depends on the type of F-box protein. In the SCF complex, it serves as an adapter that links the F-box protein to CUL1. Plays a role during early flowers reproductive development. This Arabidopsis thaliana (Mouse-ear cress) protein is SKP1-like protein 11 (ASK11).